The sequence spans 1189 residues: Zinc finger CCCH domain-containing protein 6 (1189 aa).

The span at 1–12 (MTDSEHAGHDRE) shows a compositional bias: basic and acidic residues. Residues 1–105 (MTDSEHAGHD…HKKRTGFYRD (105 aa)) are disordered. The span at 13–28 (DGELEDGEIDDAGFEE) shows a compositional bias: acidic residues. The stretch at 27–73 (EEIQEKEAKENEKQKSEKAYRKSRKKHKKEREKKKSKRRKREKHKHN) forms a coiled coil. Residues 29–46 (IQEKEAKENEKQKSEKAY) are compositionally biased toward basic and acidic residues. Residues 47-73 (RKSRKKHKKEREKKKSKRRKREKHKHN) show a composition bias toward basic residues. 3 consecutive C3H1-type zinc fingers follow at residues 273–299 (KGKQICKYFLEGRCIKGDQCKFDHDAE), 301–328 (EKRKEICKFYLQGYCTKGENCIYMHNEF), and 329–352 (PCKFYHSGAKCYQGDNCKFSHDDL). Residues 353 to 385 (TKETKKLLDKVLNTDEELINEDERELEELRKRG) adopt a coiled-coil conformation. Disordered stretches follow at residues 451–530 (FYTS…GPQN), 630–659 (PPVVQDSPNHGSGSDGSSTRTGHGPLPVPG), 676–755 (YQED…GNQV), 947–1026 (LEQF…PYAP), and 1051–1189 (PRDH…SPFC). Low complexity predominate over residues 461 to 478 (QFQGSSPHPQHIYSSGSS). Residues 505–525 (AGPPGLPVPQSPPLPPGPPEI) show a composition bias toward pro residues. Low complexity predominate over residues 639–659 (HGSGSDGSSTRTGHGPLPVPG). A compositionally biased stretch (polar residues) spans 718-741 (KTLQKQTETLRNQQQPSTELSTPT). The segment covering 961–973 (GDPRLQKNFDPRL) has biased composition (basic and acidic residues). 2 stretches are compositionally biased toward low complexity: residues 1009 to 1020 (SGAGTSNSGSGA) and 1056 to 1069 (SSSTSELATASSGE). Ser1158 is modified (phosphoserine). Over residues 1164–1179 (DPGRETDDKSLKEVFK) the composition is skewed to basic and acidic residues.

This Homo sapiens (Human) protein is Zinc finger CCCH domain-containing protein 6 (ZC3H6).